The chain runs to 383 residues: Putative glutamate--cysteine ligase 2 (383 aa).

The protein belongs to the glutamate--cysteine ligase type 2 family. YbdK subfamily.

The catalysed reaction is L-cysteine + L-glutamate + ATP = gamma-L-glutamyl-L-cysteine + ADP + phosphate + H(+). Its function is as follows. ATP-dependent carboxylate-amine ligase which exhibits weak glutamate--cysteine ligase activity. The polypeptide is Putative glutamate--cysteine ligase 2 (Legionella pneumophila subsp. pneumophila (strain Philadelphia 1 / ATCC 33152 / DSM 7513)).